Reading from the N-terminus, the 216-residue chain is Small ribosomal subunit protein uS3c (216 aa).

Residues 43–118 (IKNYIQKNRR…RLKIAITRVE (76 aa)) form the KH type-2 domain.

The protein belongs to the universal ribosomal protein uS3 family. Part of the 30S ribosomal subunit.

It is found in the plastid. It localises to the chloroplast. The sequence is that of Small ribosomal subunit protein uS3c (rps3) from Dioscorea elephantipes (Elephant's foot yam).